Reading from the N-terminus, the 508-residue chain is Glycerol kinase (508 aa).

Thr-14 contributes to the ADP binding site. Residues Thr-14, Thr-15, and Ser-16 each contribute to the ATP site. Thr-14 is a sn-glycerol 3-phosphate binding site. Arg-18 contributes to the ADP binding site. Residues Arg-84, Glu-85, Tyr-136, and Asp-245 each contribute to the sn-glycerol 3-phosphate site. Residues Arg-84, Glu-85, Tyr-136, Asp-245, and Gln-246 each contribute to the glycerol site. 2 residues coordinate ADP: Thr-267 and Gly-314. ATP-binding residues include Thr-267, Gly-314, Gln-318, and Gly-415. Gly-415 and Asn-419 together coordinate ADP.

The protein belongs to the FGGY kinase family.

It catalyses the reaction glycerol + ATP = sn-glycerol 3-phosphate + ADP + H(+). The protein operates within polyol metabolism; glycerol degradation via glycerol kinase pathway; sn-glycerol 3-phosphate from glycerol: step 1/1. Its activity is regulated as follows. Inhibited by fructose 1,6-bisphosphate (FBP). Key enzyme in the regulation of glycerol uptake and metabolism. Catalyzes the phosphorylation of glycerol to yield sn-glycerol 3-phosphate. The chain is Glycerol kinase from Bordetella parapertussis (strain 12822 / ATCC BAA-587 / NCTC 13253).